A 100-amino-acid polypeptide reads, in one-letter code: MAKKSMIEREKKRQRLVAKYASKRQELKAQLASAETQEEIMSIHRQLQRLPRNSAPSRLRNRCWLTGRPRGYYRDFGLCRNALREMAHQGLLPGVVKSSW.

The protein belongs to the universal ribosomal protein uS14 family. In terms of assembly, part of the 30S ribosomal subunit. Contacts proteins S3 and S10.

In terms of biological role, binds 16S rRNA, required for the assembly of 30S particles and may also be responsible for determining the conformation of the 16S rRNA at the A site. This Thermosynechococcus vestitus (strain NIES-2133 / IAM M-273 / BP-1) protein is Small ribosomal subunit protein uS14.